A 148-amino-acid chain; its full sequence is SsrA-binding protein (148 aa).

The segment at 119 to 148 (AKGKKQHDKRQSMKEADWKREKQRLIKHTR) is disordered. Residues 127–142 (KRQSMKEADWKREKQR) show a composition bias toward basic and acidic residues.

Belongs to the SmpB family.

The protein resides in the cytoplasm. Functionally, required for rescue of stalled ribosomes mediated by trans-translation. Binds to transfer-messenger RNA (tmRNA), required for stable association of tmRNA with ribosomes. tmRNA and SmpB together mimic tRNA shape, replacing the anticodon stem-loop with SmpB. tmRNA is encoded by the ssrA gene; the 2 termini fold to resemble tRNA(Ala) and it encodes a 'tag peptide', a short internal open reading frame. During trans-translation Ala-aminoacylated tmRNA acts like a tRNA, entering the A-site of stalled ribosomes, displacing the stalled mRNA. The ribosome then switches to translate the ORF on the tmRNA; the nascent peptide is terminated with the 'tag peptide' encoded by the tmRNA and targeted for degradation. The ribosome is freed to recommence translation, which seems to be the essential function of trans-translation. The chain is SsrA-binding protein from Neisseria gonorrhoeae (strain ATCC 700825 / FA 1090).